A 428-amino-acid chain; its full sequence is Serine--tRNA ligase (428 aa).

231 to 233 lines the L-serine pocket; that stretch reads TAE. Position 262 to 264 (262 to 264) interacts with ATP; the sequence is RSE. Glutamate 285 serves as a coordination point for L-serine. 349–352 is a binding site for ATP; that stretch reads EISS. Serine 385 contributes to the L-serine binding site.

This sequence belongs to the class-II aminoacyl-tRNA synthetase family. Type-1 seryl-tRNA synthetase subfamily. Homodimer. The tRNA molecule binds across the dimer.

Its subcellular location is the cytoplasm. The enzyme catalyses tRNA(Ser) + L-serine + ATP = L-seryl-tRNA(Ser) + AMP + diphosphate + H(+). The catalysed reaction is tRNA(Sec) + L-serine + ATP = L-seryl-tRNA(Sec) + AMP + diphosphate + H(+). The protein operates within aminoacyl-tRNA biosynthesis; selenocysteinyl-tRNA(Sec) biosynthesis; L-seryl-tRNA(Sec) from L-serine and tRNA(Sec): step 1/1. Catalyzes the attachment of serine to tRNA(Ser). Is also able to aminoacylate tRNA(Sec) with serine, to form the misacylated tRNA L-seryl-tRNA(Sec), which will be further converted into selenocysteinyl-tRNA(Sec). The sequence is that of Serine--tRNA ligase from Staphylococcus aureus (strain Mu3 / ATCC 700698).